The primary structure comprises 335 residues: Endo-beta-N-acetylglucosaminidase F2 (335 aa).

Residues 1-45 (MKTANFSFALCLSVVIMLFIKCTRSEQDLSVTKDAIAQKSGVTVS) form the signal peptide. A GH18 domain is found at 61–321 (QISAGYYRTW…SSNDNTLRAP (261 aa)). Ser-73, Ser-89, and Ser-143 each carry an O-linked (Man...) serine glycan. Glu-171 acts as the Proton donor in catalysis.

This sequence belongs to the glycosyl hydrolase 18 family. In terms of assembly, monomer. Post-translationally, carbohydrates at Ser-73, Ser-89 and Ser-143 consist of (2-OMe)Man1-4GlcNAcU1-4GlcU1-4Glc1-4(2-OMe)GlcU1-4[(2-OMe)Rham1-2]Man.

It is found in the secreted. It carries out the reaction an N(4)-(oligosaccharide-(1-&gt;3)-[oligosaccharide-(1-&gt;6)]-beta-D-Man-(1-&gt;4)-beta-D-GlcNAc-(1-&gt;4)-alpha-D-GlcNAc)-L-asparaginyl-[protein] + H2O = an oligosaccharide-(1-&gt;3)-[oligosaccharide-(1-&gt;6)]-beta-D-Man-(1-&gt;4)-D-GlcNAc + N(4)-(N-acetyl-beta-D-glucosaminyl)-L-asparaginyl-[protein]. Endohydrolysis of the di-N-acetylchitobiosyl unit in high-mannose glycopeptides and glycoproteins. Complex biantennary glycans are the preferred substrates. Tri- and tetraantennary glycans are not hydrolyzed, and high mannose glycans are very poor substrates. This chain is Endo-beta-N-acetylglucosaminidase F2 (endOF2), found in Elizabethkingia meningoseptica (Chryseobacterium meningosepticum).